Consider the following 881-residue polypeptide: Envelope glycoprotein gp160 (881 aa).

A signal peptide spans 1-19 (MGCLGNQLLIAILLLSVYG). Residues 20 to 696 (IYCTQYVTVF…ASWIKYIQYG (677 aa)) lie on the Extracellular side of the membrane. Residue Asn37 is glycosylated (N-linked (GlcNAc...) asparagine; by host). Residues Cys44 and Cys57 are joined by a disulfide bond. N-linked (GlcNAc...) asparagine; by host glycosylation is found at Asn70, Asn114, Asn148, Asn158, Asn186, Asn200, Asn204, Asn214, Asn246, Asn249, Asn280, Asn286, Asn297, Asn308, Asn318, Asn373, and Asn379. Disulfide bonds link Cys101–Cys222, Cys108–Cys213, Cys113–Cys170, Cys235–Cys265, and Cys245–Cys257. A V1 region spans residues 113–169 (CNKSETDRWGLTKSSTTITTAAPTSAPVSEKIDMVNETSSCIAQNNCTGLEQEQMIS). A V2 region spans residues 170–213 (CKFTMTGLKRDKTKEYNETWYSTDLVCEQGNSTDNESRCYMNHC). The tract at residues 313–345 (CRRPGNKTVLPVTIMSGLVFHSQPINDRPKQAW) is V3. Cysteines 313 and 346 form a disulfide. Disulfide bonds link Cys397-Cys461 and Cys404-Cys434. The interval 404 to 434 (CKMNWFLNWVEDRDVTTQRPKERHRRNYVPC) is V4. N-linked (GlcNAc...) asparagine; by host glycosylation is found at Asn462 and Asn478. The interval 477 to 484 (GNQTSITM) is V5. The segment at 528-548 (GVFVLGFLGFLATAGSAMGAA) is fusion peptide. Positions 591 to 607 (LQTRVTAIEKYLKDQAQ) are immunosuppression. Residues Asn627, Asn636, and Asn652 are each glycosylated (N-linked (GlcNAc...) asparagine; by host). Positions 636–668 (NDTWQEWERKVDFLEENITALLEEAQIQQEKNM) form a coiled coil. Residues 673-694 (KLNSWDVFGNWFDLASWIKYIQ) form an MPER; binding to GalCer region. A helical membrane pass occupies residues 697 to 717 (IYVVVGVILLRIVIYIVQMLA). Residues 718–881 (KLRQGYRPVF…IRQGLELTLL (164 aa)) are Cytoplasmic-facing. A YXXV motif; contains endocytosis signal motif is present at residues 723–726 (YRPV). The interval 737–761 (THTQQDPALPTREGKEGDGGEGGGN) is disordered. Residue Cys789 is the site of S-palmitoyl cysteine; by host attachment. Residues 880–881 (LL) carry the Di-leucine internalization motif motif.

In terms of assembly, the mature envelope protein (Env) consists of a homotrimer of non-covalently associated gp120-gp41 heterodimers. The resulting complex protrudes from the virus surface as a spike. Interacts with host CD4 and CCR5. Gp120 also interacts with the C-type lectins CD209/DC-SIGN and CLEC4M/DC-SIGNR (collectively referred to as DC-SIGN(R)). As to quaternary structure, the mature envelope protein (Env) consists of a homotrimer of non-covalently associated gp120-gp41 heterodimers. The resulting complex protrudes from the virus surface as a spike. In terms of processing, specific enzymatic cleavages in vivo yield mature proteins. Envelope glycoproteins are synthesized as an inactive precursor that is heavily N-glycosylated and processed likely by host cell furin in the Golgi to yield the mature SU and TM proteins. The cleavage site between SU and TM requires the minimal sequence [KR]-X-[KR]-R. Palmitoylation of the transmembrane protein and of Env polyprotein (prior to its proteolytic cleavage) is essential for their association with host cell membrane lipid rafts. Palmitoylation is therefore required for envelope trafficking to classical lipid rafts, but not for viral replication.

The protein localises to the virion membrane. The protein resides in the host cell membrane. It localises to the host endosome membrane. Its function is as follows. The surface protein gp120 (SU) attaches the virus to the host lymphoid cell by binding to the primary receptor CD4. This interaction induces a structural rearrangement creating a high affinity binding site for a chemokine coreceptor like CCR5. This peculiar 2 stage receptor-interaction strategy allows gp120 to maintain the highly conserved coreceptor-binding site in a cryptic conformation, protected from neutralizing antibodies. These changes are transmitted to the transmembrane protein gp41 and are thought to activate its fusogenic potential by unmasking its fusion peptide. Surface protein gp120 (SU) may target the virus to gut-associated lymphoid tissue (GALT) by binding host ITGA4/ITGB7 (alpha-4/beta-7 integrins), a complex that mediates T-cell migration to the GALT. Interaction between gp120 and ITGA4/ITGB7 would allow the virus to enter GALT early in the infection, infecting and killing most of GALT's resting CD4+ T-cells. This T-cell depletion is believed to be the major insult to the host immune system leading to AIDS. In terms of biological role, the surface protein gp120 is a ligand for CD209/DC-SIGN and CLEC4M/DC-SIGNR, which are respectively found on dendritic cells (DCs), and on endothelial cells of liver sinusoids and lymph node sinuses. These interactions allow capture of viral particles at mucosal surfaces by these cells and subsequent transmission to permissive cells. DCs are professional antigen presenting cells, critical for host immunity by inducing specific immune responses against a broad variety of pathogens. They act as sentinels in various tissues where they take up antigen, process it, and present it to T-cells following migration to lymphoid organs. SIV subverts the migration properties of dendritic cells to gain access to CD4+ T-cells in lymph nodes. Virus transmission to permissive T-cells occurs either in trans (without DCs infection, through viral capture and transmission), or in cis (following DCs productive infection, through the usual CD4-gp120 interaction), thereby inducing a robust infection. In trans infection, bound virions remain infectious over days and it is proposed that they are not degraded, but protected in non-lysosomal acidic organelles within the DCs close to the cell membrane thus contributing to the viral infectious potential during DCs' migration from the periphery to the lymphoid tissues. On arrival at lymphoid tissues, intact virions recycle back to DCs' cell surface allowing virus transmission to CD4+ T-cells. Virion capture also seems to lead to MHC-II-restricted viral antigen presentation, and probably to the activation of SIV-specific CD4+ cells. Functionally, the transmembrane protein gp41 (TM) acts as a class I viral fusion protein. Under the current model, the protein has at least 3 conformational states: pre-fusion native state, pre-hairpin intermediate state, and post-fusion hairpin state. During fusion of viral and target intracellular membranes, the coiled coil regions (heptad repeats) assume a trimer-of-hairpins structure, positioning the fusion peptide in close proximity to the C-terminal region of the ectodomain. The formation of this structure appears to drive apposition and subsequent fusion of viral and target cell membranes. Complete fusion occurs in host cell endosomes. The virus undergoes clathrin-dependent internalization long before endosomal fusion, thus minimizing the surface exposure of conserved viral epitopes during fusion and reducing the efficacy of inhibitors targeting these epitopes. Membranes fusion leads to delivery of the nucleocapsid into the cytoplasm. Its function is as follows. The envelope glycoprotein gp160 precursor down-modulates cell surface CD4 antigen by interacting with it in the endoplasmic reticulum and blocking its transport to the cell surface. The gp120-gp41 heterodimer allows rapid transcytosis of the virus through CD4 negative cells such as simple epithelial monolayers of the intestinal, rectal and endocervical epithelial barriers. Both gp120 and gp41 specifically recognize glycosphingolipids galactosyl-ceramide (GalCer) or 3' sulfo-galactosyl-ceramide (GalS) present in the lipid rafts structures of epithelial cells. Binding to these alternative receptors allows the rapid transcytosis of the virus through the epithelial cells. This transcytotic vesicle-mediated transport of virions from the apical side to the basolateral side of the epithelial cells does not involve infection of the cells themselves. The sequence is that of Envelope glycoprotein gp160 (env) from Cercopithecidae (Old World monkeys).